A 159-amino-acid chain; its full sequence is SsrA-binding protein (159 aa).

Over residues 138–153 (KREDGKDKDWSREKER) the composition is skewed to basic and acidic residues. The tract at residues 138–159 (KREDGKDKDWSREKERLMKHKA) is disordered.

It belongs to the SmpB family.

Its subcellular location is the cytoplasm. Required for rescue of stalled ribosomes mediated by trans-translation. Binds to transfer-messenger RNA (tmRNA), required for stable association of tmRNA with ribosomes. tmRNA and SmpB together mimic tRNA shape, replacing the anticodon stem-loop with SmpB. tmRNA is encoded by the ssrA gene; the 2 termini fold to resemble tRNA(Ala) and it encodes a 'tag peptide', a short internal open reading frame. During trans-translation Ala-aminoacylated tmRNA acts like a tRNA, entering the A-site of stalled ribosomes, displacing the stalled mRNA. The ribosome then switches to translate the ORF on the tmRNA; the nascent peptide is terminated with the 'tag peptide' encoded by the tmRNA and targeted for degradation. The ribosome is freed to recommence translation, which seems to be the essential function of trans-translation. The polypeptide is SsrA-binding protein (Pseudoalteromonas translucida (strain TAC 125)).